The following is a 636-amino-acid chain: Threonine--tRNA ligase (636 aa).

Residues 1-63 (MNEINVTLPD…ADGARVEIVT (63 aa)) form the TGS domain. Residues 243 to 534 (DHRKLGRELD…LIEHFAGNFP (292 aa)) are catalytic. Cys-335, His-386, and His-511 together coordinate Zn(2+).

The protein belongs to the class-II aminoacyl-tRNA synthetase family. Homodimer. Zn(2+) serves as cofactor.

Its subcellular location is the cytoplasm. It catalyses the reaction tRNA(Thr) + L-threonine + ATP = L-threonyl-tRNA(Thr) + AMP + diphosphate + H(+). In terms of biological role, catalyzes the attachment of threonine to tRNA(Thr) in a two-step reaction: L-threonine is first activated by ATP to form Thr-AMP and then transferred to the acceptor end of tRNA(Thr). Also edits incorrectly charged L-seryl-tRNA(Thr). The protein is Threonine--tRNA ligase of Geobacter sp. (strain M21).